The following is a 397-amino-acid chain: Succinate--CoA ligase [ADP-forming] subunit beta (397 aa).

The ATP-grasp domain occupies 9–254; the sequence is KALLRSYGAP…ETEEDPKELA (246 aa). Residues Lys46, 53 to 55, Glu109, Ser112, and Glu117 contribute to the ATP site; that span reads GRG. Residues Asn209 and Asp223 each contribute to the Mg(2+) site. Substrate-binding positions include Asn274 and 331–333; that span reads GIM.

The protein belongs to the succinate/malate CoA ligase beta subunit family. In terms of assembly, heterotetramer of two alpha and two beta subunits. The cofactor is Mg(2+).

The catalysed reaction is succinate + ATP + CoA = succinyl-CoA + ADP + phosphate. The enzyme catalyses GTP + succinate + CoA = succinyl-CoA + GDP + phosphate. It functions in the pathway carbohydrate metabolism; tricarboxylic acid cycle; succinate from succinyl-CoA (ligase route): step 1/1. In terms of biological role, succinyl-CoA synthetase functions in the citric acid cycle (TCA), coupling the hydrolysis of succinyl-CoA to the synthesis of either ATP or GTP and thus represents the only step of substrate-level phosphorylation in the TCA. The beta subunit provides nucleotide specificity of the enzyme and binds the substrate succinate, while the binding sites for coenzyme A and phosphate are found in the alpha subunit. This chain is Succinate--CoA ligase [ADP-forming] subunit beta, found in Cereibacter sphaeroides (strain ATCC 17025 / ATH 2.4.3) (Rhodobacter sphaeroides).